The primary structure comprises 164 residues: Ribosome-binding factor A (164 aa).

Positions 123 to 164 (ARDLGVPPSGEDDGDDEADDEDDDGGEEGPGAAAPPPADEGR) are disordered. Positions 132-149 (GEDDGDDEADDEDDDGGE) are enriched in acidic residues. Over residues 155 to 164 (AAPPPADEGR) the composition is skewed to pro residues.

Belongs to the RbfA family. As to quaternary structure, monomer. Binds 30S ribosomal subunits, but not 50S ribosomal subunits or 70S ribosomes.

The protein localises to the cytoplasm. Its function is as follows. One of several proteins that assist in the late maturation steps of the functional core of the 30S ribosomal subunit. Associates with free 30S ribosomal subunits (but not with 30S subunits that are part of 70S ribosomes or polysomes). Required for efficient processing of 16S rRNA. May interact with the 5'-terminal helix region of 16S rRNA. In Rhodospirillum rubrum (strain ATCC 11170 / ATH 1.1.1 / DSM 467 / LMG 4362 / NCIMB 8255 / S1), this protein is Ribosome-binding factor A.